Reading from the N-terminus, the 115-residue chain is Probable K(+)/H(+) antiporter subunit C (115 aa).

Helical transmembrane passes span 4 to 21, 28 to 47, and 75 to 97; these read ILSAGIGTLTASGVYLLL, VIIGLSLLSFAVNLFIFGMG, and ALVLTAIVIGFAMTALFLVVLLA.

It belongs to the CPA3 antiporters (TC 2.A.63) subunit C family. In terms of assembly, may form a hetero-oligomeric complex that consists of six subunits: PhaAB, PhaC, PhaD, PhaE, PhaF and PhaG.

It is found in the cell membrane. Its function is as follows. Part of a K(+) efflux system which is required for the adaptation of R.meliloti to alkaline pH as well as for the infection process during symbiotic nodule development. This chain is Probable K(+)/H(+) antiporter subunit C (phaC), found in Rhizobium meliloti (strain 1021) (Ensifer meliloti).